Consider the following 149-residue polypeptide: Cytochrome c oxidase subunit 5A, mitochondrial (149 aa).

This sequence belongs to the cytochrome c oxidase subunit 5A family. Component of the cytochrome c oxidase (complex IV, CIV), a multisubunit enzyme composed of a catalytic core of 3 subunits and several supernumerary subunits. The complex exists as a monomer or a dimer and forms supercomplexes (SCs) in the inner mitochondrial membrane with ubiquinol-cytochrome c oxidoreductase (cytochrome b-c1 complex, complex III, CIII).

Its subcellular location is the mitochondrion inner membrane. The protein operates within energy metabolism; oxidative phosphorylation. In terms of biological role, component of the cytochrome c oxidase, the last enzyme in the mitochondrial electron transport chain which drives oxidative phosphorylation. The respiratory chain contains 3 multisubunit complexes succinate dehydrogenase (complex II, CII), ubiquinol-cytochrome c oxidoreductase (cytochrome b-c1 complex, complex III, CIII) and cytochrome c oxidase (complex IV, CIV), that cooperate to transfer electrons derived from NADH and succinate to molecular oxygen, creating an electrochemical gradient over the inner membrane that drives transmembrane transport and the ATP synthase. Cytochrome c oxidase is the component of the respiratory chain that catalyzes the reduction of oxygen to water. Electrons originating from reduced cytochrome c in the intermembrane space (IMS) are transferred via the dinuclear copper A center (CU(A)) of subunit 2 and heme A of subunit 1 to the active site in subunit 1, a binuclear center (BNC) formed by heme A3 and copper B (CU(B)). The BNC reduces molecular oxygen to 2 water molecules using 4 electrons from cytochrome c in the IMS and 4 protons from the mitochondrial matrix. This Drosophila melanogaster (Fruit fly) protein is Cytochrome c oxidase subunit 5A, mitochondrial.